The sequence spans 844 residues: DNA mismatch repair protein MutS (844 aa).

602–609 (GPNMSGKS) serves as a coordination point for ATP.

This sequence belongs to the DNA mismatch repair MutS family.

Functionally, this protein is involved in the repair of mismatches in DNA. It is possible that it carries out the mismatch recognition step. This protein has a weak ATPase activity. The chain is DNA mismatch repair protein MutS from Streptococcus pneumoniae (strain Hungary19A-6).